Consider the following 330-residue polypeptide: DNA-directed RNA polymerase subunit alpha (330 aa).

The interval Met-1–Lys-232 is alpha N-terminal domain (alpha-NTD). Residues Glu-248–Glu-330 form an alpha C-terminal domain (alpha-CTD) region.

The protein belongs to the RNA polymerase alpha chain family. As to quaternary structure, homodimer. The RNAP catalytic core consists of 2 alpha, 1 beta, 1 beta' and 1 omega subunit. When a sigma factor is associated with the core the holoenzyme is formed, which can initiate transcription.

The catalysed reaction is RNA(n) + a ribonucleoside 5'-triphosphate = RNA(n+1) + diphosphate. Functionally, DNA-dependent RNA polymerase catalyzes the transcription of DNA into RNA using the four ribonucleoside triphosphates as substrates. This chain is DNA-directed RNA polymerase subunit alpha, found in Bacteroides fragilis (strain ATCC 25285 / DSM 2151 / CCUG 4856 / JCM 11019 / LMG 10263 / NCTC 9343 / Onslow / VPI 2553 / EN-2).